The chain runs to 203 residues: Thymidylate kinase (203 aa).

Residue 14 to 21 (GGEGIGKS) coordinates ATP.

It belongs to the thymidylate kinase family.

It catalyses the reaction dTMP + ATP = dTDP + ADP. Functionally, phosphorylation of dTMP to form dTDP in both de novo and salvage pathways of dTTP synthesis. The chain is Thymidylate kinase from Rickettsia conorii (strain ATCC VR-613 / Malish 7).